Reading from the N-terminus, the 225-residue chain is Methylthioribulose-1-phosphate dehydratase (225 aa).

2 residues coordinate Zn(2+): H106 and H108.

It belongs to the aldolase class II family. MtnB subfamily. Zn(2+) serves as cofactor.

It catalyses the reaction 5-(methylsulfanyl)-D-ribulose 1-phosphate = 5-methylsulfanyl-2,3-dioxopentyl phosphate + H2O. Its pathway is amino-acid biosynthesis; L-methionine biosynthesis via salvage pathway; L-methionine from S-methyl-5-thio-alpha-D-ribose 1-phosphate: step 2/6. In terms of biological role, catalyzes the dehydration of methylthioribulose-1-phosphate (MTRu-1-P) into 2,3-diketo-5-methylthiopentyl-1-phosphate (DK-MTP-1-P). This chain is Methylthioribulose-1-phosphate dehydratase, found in Xanthomonas oryzae pv. oryzae (strain KACC10331 / KXO85).